Here is a 289-residue protein sequence, read N- to C-terminus: Protoheme IX farnesyltransferase 2 (289 aa).

9 helical membrane-spanning segments follow: residues M1 to A21, L28 to L48, Y76 to F96, I100 to M120, V125 to A145, V155 to F175, L199 to G219, T221 to L241, and C260 to V280.

It belongs to the UbiA prenyltransferase family. Protoheme IX farnesyltransferase subfamily.

The protein resides in the cell inner membrane. It carries out the reaction heme b + (2E,6E)-farnesyl diphosphate + H2O = Fe(II)-heme o + diphosphate. Its pathway is porphyrin-containing compound metabolism; heme O biosynthesis; heme O from protoheme: step 1/1. Functionally, converts heme B (protoheme IX) to heme O by substitution of the vinyl group on carbon 2 of heme B porphyrin ring with a hydroxyethyl farnesyl side group. This Shewanella woodyi (strain ATCC 51908 / MS32) protein is Protoheme IX farnesyltransferase 2.